We begin with the raw amino-acid sequence, 335 residues long: Ketol-acid reductoisomerase (NADP(+)) 2 (335 aa).

The KARI N-terminal Rossmann domain maps to 1–180 (MKTYYEKDAN…GCTRAGVIET (180 aa)). Residues 24–27 (YGSQ), Arg47, Ser51, and 81–84 (DEQQ) each bind NADP(+). Residue His106 is part of the active site. NADP(+) is bound at residue Gly132. The 146-residue stretch at 181-326 (TFQEETETDL…AELREMMSWI (146 aa)) folds into the KARI C-terminal knotted domain. Residues Asp189, Glu193, Glu225, and Glu229 each contribute to the Mg(2+) site. Ser250 lines the substrate pocket.

The protein belongs to the ketol-acid reductoisomerase family. Mg(2+) serves as cofactor.

The enzyme catalyses (2R)-2,3-dihydroxy-3-methylbutanoate + NADP(+) = (2S)-2-acetolactate + NADPH + H(+). The catalysed reaction is (2R,3R)-2,3-dihydroxy-3-methylpentanoate + NADP(+) = (S)-2-ethyl-2-hydroxy-3-oxobutanoate + NADPH + H(+). It participates in amino-acid biosynthesis; L-isoleucine biosynthesis; L-isoleucine from 2-oxobutanoate: step 2/4. The protein operates within amino-acid biosynthesis; L-valine biosynthesis; L-valine from pyruvate: step 2/4. Its function is as follows. Involved in the biosynthesis of branched-chain amino acids (BCAA). Catalyzes an alkyl-migration followed by a ketol-acid reduction of (S)-2-acetolactate (S2AL) to yield (R)-2,3-dihydroxy-isovalerate. In the isomerase reaction, S2AL is rearranged via a Mg-dependent methyl migration to produce 3-hydroxy-3-methyl-2-ketobutyrate (HMKB). In the reductase reaction, this 2-ketoacid undergoes a metal-dependent reduction by NADPH to yield (R)-2,3-dihydroxy-isovalerate. The polypeptide is Ketol-acid reductoisomerase (NADP(+)) 2 (Bacillus cereus (strain ATCC 10987 / NRS 248)).